A 346-amino-acid polypeptide reads, in one-letter code: Biotin synthase (346 aa).

One can recognise a Radical SAM core domain in the interval 38 to 256; that stretch reads RQVQVSTLLS…IAVARIMMPT (219 aa). Residues Cys53, Cys57, and Cys60 each contribute to the [4Fe-4S] cluster site. Residues Cys97, Cys128, Cys188, and Arg260 each coordinate [2Fe-2S] cluster.

Belongs to the radical SAM superfamily. Biotin synthase family. Homodimer. The cofactor is [4Fe-4S] cluster. It depends on [2Fe-2S] cluster as a cofactor.

It catalyses the reaction (4R,5S)-dethiobiotin + (sulfur carrier)-SH + 2 reduced [2Fe-2S]-[ferredoxin] + 2 S-adenosyl-L-methionine = (sulfur carrier)-H + biotin + 2 5'-deoxyadenosine + 2 L-methionine + 2 oxidized [2Fe-2S]-[ferredoxin]. It participates in cofactor biosynthesis; biotin biosynthesis; biotin from 7,8-diaminononanoate: step 2/2. Functionally, catalyzes the conversion of dethiobiotin (DTB) to biotin by the insertion of a sulfur atom into dethiobiotin via a radical-based mechanism. The polypeptide is Biotin synthase (Escherichia coli O6:H1 (strain CFT073 / ATCC 700928 / UPEC)).